The chain runs to 196 residues: Large ribosomal subunit protein bL9c (196 aa).

The N-terminal 41 residues, 1–41 (MASTTSTLSLSWSNSFHSFAGAISEPQKSPENCRVMLPIVA), are a transit peptide targeting the chloroplast.

In terms of assembly, component of the chloroplast large ribosomal subunit (LSU). Mature 70S chloroplast ribosomes of higher plants consist of a small (30S) and a large (50S) subunit. The 30S small subunit contains 1 molecule of ribosomal RNA (16S rRNA) and 24 different proteins. The 50S large subunit contains 3 rRNA molecules (23S, 5S and 4.5S rRNA) and 33 different proteins.

The protein resides in the plastid. It localises to the chloroplast. In terms of biological role, component of the chloroplast ribosome (chloro-ribosome), a dedicated translation machinery responsible for the synthesis of chloroplast genome-encoded proteins, including proteins of the transcription and translation machinery and components of the photosynthetic apparatus. The protein is Large ribosomal subunit protein bL9c (RPL9) of Spinacia oleracea (Spinach).